The chain runs to 343 residues: MTGCSAPAETSGSRKMVDPFGRNISYLRVSVTDRCDLRCFYCMSEDMTFLPKADLLTLEELDRLCSAFIAKGVRKLRLTGGEPLVRRNVMSLIRSLSRHLQSGALKELTLTTNGSQLVRFANELKDCGVKRINVSLDTLDPARFREITRWGDIQKVMAGIDAAQAAGLAVKINAVALKNLNEDEIPSLMEWAHSRDMALTLIEVMPMGDIGASRADQYLPLSMLRARLEGQYTLTDLDDSTGGPARYVRVSETGGKLGFITPMTHNFCESCNRVRITCTGTLHTCLGHEDASDLRRPLRASPTDELLYETIDRAIGLKPKGHDFIIDRHNRPSVSRHMSVTGG.

Residues 19–244 (PFGRNISYLR…TDLDDSTGGP (226 aa)) form the Radical SAM core domain. Arginine 28 contacts GTP. [4Fe-4S] cluster is bound by residues cysteine 35 and cysteine 39. An S-adenosyl-L-methionine-binding site is contributed by tyrosine 41. [4Fe-4S] cluster is bound at residue cysteine 42. GTP is bound at residue arginine 77. Glycine 81 provides a ligand contact to S-adenosyl-L-methionine. Threonine 111 is a binding site for GTP. Serine 135 is an S-adenosyl-L-methionine binding site. Lysine 171 serves as a coordination point for GTP. Methionine 205 lines the S-adenosyl-L-methionine pocket. [4Fe-4S] cluster is bound by residues cysteine 268 and cysteine 271. Position 273–275 (273–275 (RVR)) interacts with GTP. Position 285 (cysteine 285) interacts with [4Fe-4S] cluster.

Belongs to the radical SAM superfamily. MoaA family. As to quaternary structure, monomer and homodimer. It depends on [4Fe-4S] cluster as a cofactor.

The enzyme catalyses GTP + AH2 + S-adenosyl-L-methionine = (8S)-3',8-cyclo-7,8-dihydroguanosine 5'-triphosphate + 5'-deoxyadenosine + L-methionine + A + H(+). The protein operates within cofactor biosynthesis; molybdopterin biosynthesis. Functionally, catalyzes the cyclization of GTP to (8S)-3',8-cyclo-7,8-dihydroguanosine 5'-triphosphate. In Nitrobacter winogradskyi (strain ATCC 25391 / DSM 10237 / CIP 104748 / NCIMB 11846 / Nb-255), this protein is GTP 3',8-cyclase.